The sequence spans 101 residues: Small ribosomal subunit protein uS14 (101 aa).

It belongs to the universal ribosomal protein uS14 family. As to quaternary structure, part of the 30S ribosomal subunit. Contacts proteins S3 and S10.

Functionally, binds 16S rRNA, required for the assembly of 30S particles and may also be responsible for determining the conformation of the 16S rRNA at the A site. The sequence is that of Small ribosomal subunit protein uS14 from Enterobacter sp. (strain 638).